A 246-amino-acid polypeptide reads, in one-letter code: Ribosomal RNA small subunit methyltransferase G (246 aa).

Residues Gly81, Phe86, 137–138 (AE), and Arg156 each bind S-adenosyl-L-methionine. A disordered region spans residues 221 to 246 (LVLIRKERPTPKAYPRRAGVPAKSPL).

Belongs to the methyltransferase superfamily. RNA methyltransferase RsmG family.

It localises to the cytoplasm. In terms of biological role, specifically methylates the N7 position of a guanine in 16S rRNA. The protein is Ribosomal RNA small subunit methyltransferase G of Symbiobacterium thermophilum (strain DSM 24528 / JCM 14929 / IAM 14863 / T).